An 867-amino-acid chain; its full sequence is Protein translocase subunit SecA (867 aa).

Residues Gln85, 103–107 (GEGKT), and Asp491 each bind ATP.

The protein belongs to the SecA family. Monomer and homodimer. Part of the essential Sec protein translocation apparatus which comprises SecA, SecYEG and auxiliary proteins SecDF. Other proteins may also be involved.

The protein resides in the cell membrane. It localises to the cytoplasm. It carries out the reaction ATP + H2O + cellular proteinSide 1 = ADP + phosphate + cellular proteinSide 2.. Functionally, part of the Sec protein translocase complex. Interacts with the SecYEG preprotein conducting channel. Has a central role in coupling the hydrolysis of ATP to the transfer of proteins into and across the cell membrane, serving as an ATP-driven molecular motor driving the stepwise translocation of polypeptide chains across the membrane. This Mycoplasmopsis pulmonis (strain UAB CTIP) (Mycoplasma pulmonis) protein is Protein translocase subunit SecA.